The sequence spans 238 residues: Purine nucleoside phosphorylase DeoD-type (238 aa).

Residue His5 participates in a purine D-ribonucleoside binding. Phosphate is bound by residues Gly21, Arg25, Arg44, and 88–91; that span reads RVGS. A purine D-ribonucleoside is bound by residues 180 to 182 and 204 to 205; these read EME and SD. The Proton donor role is filled by Asp205.

It belongs to the PNP/UDP phosphorylase family. In terms of assembly, homohexamer; trimer of homodimers.

The enzyme catalyses a purine D-ribonucleoside + phosphate = a purine nucleobase + alpha-D-ribose 1-phosphate. It catalyses the reaction a purine 2'-deoxy-D-ribonucleoside + phosphate = a purine nucleobase + 2-deoxy-alpha-D-ribose 1-phosphate. Functionally, catalyzes the reversible phosphorolytic breakdown of the N-glycosidic bond in the beta-(deoxy)ribonucleoside molecules, with the formation of the corresponding free purine bases and pentose-1-phosphate. This Proteus mirabilis (strain HI4320) protein is Purine nucleoside phosphorylase DeoD-type.